The chain runs to 212 residues: Pyridoxine/pyridoxamine 5'-phosphate oxidase (212 aa).

Residues 8–11 (RRNY) and lysine 66 contribute to the substrate site. FMN is bound by residues 61–66 (RIVLLK), 76–77 (FT), arginine 82, lysine 83, and glutamine 105. Residues tyrosine 123, arginine 127, and serine 131 each contribute to the substrate site. Residues 140–141 (QS) and tryptophan 184 each bind FMN. 190–192 (RLH) provides a ligand contact to substrate. Arginine 194 lines the FMN pocket.

Belongs to the pyridoxamine 5'-phosphate oxidase family. As to quaternary structure, homodimer. FMN is required as a cofactor.

The catalysed reaction is pyridoxamine 5'-phosphate + O2 + H2O = pyridoxal 5'-phosphate + H2O2 + NH4(+). It carries out the reaction pyridoxine 5'-phosphate + O2 = pyridoxal 5'-phosphate + H2O2. It participates in cofactor metabolism; pyridoxal 5'-phosphate salvage; pyridoxal 5'-phosphate from pyridoxamine 5'-phosphate: step 1/1. The protein operates within cofactor metabolism; pyridoxal 5'-phosphate salvage; pyridoxal 5'-phosphate from pyridoxine 5'-phosphate: step 1/1. Catalyzes the oxidation of either pyridoxine 5'-phosphate (PNP) or pyridoxamine 5'-phosphate (PMP) into pyridoxal 5'-phosphate (PLP). This Cupriavidus metallidurans (strain ATCC 43123 / DSM 2839 / NBRC 102507 / CH34) (Ralstonia metallidurans) protein is Pyridoxine/pyridoxamine 5'-phosphate oxidase.